We begin with the raw amino-acid sequence, 139 residues long: Holo-[acyl-carrier-protein] synthase (139 aa).

The Mg(2+) site is built by Asp-8 and Glu-61.

Belongs to the P-Pant transferase superfamily. AcpS family. It depends on Mg(2+) as a cofactor.

Its subcellular location is the cytoplasm. It carries out the reaction apo-[ACP] + CoA = holo-[ACP] + adenosine 3',5'-bisphosphate + H(+). Its function is as follows. Transfers the 4'-phosphopantetheine moiety from coenzyme A to a Ser of acyl-carrier-protein. In Nitrobacter hamburgensis (strain DSM 10229 / NCIMB 13809 / X14), this protein is Holo-[acyl-carrier-protein] synthase.